The sequence spans 474 residues: 3-isopropylmalate dehydratase large subunit (474 aa).

3 residues coordinate [4Fe-4S] cluster: Cys-355, Cys-415, and Cys-418.

It belongs to the aconitase/IPM isomerase family. LeuC type 1 subfamily. As to quaternary structure, heterodimer of LeuC and LeuD. The cofactor is [4Fe-4S] cluster.

It carries out the reaction (2R,3S)-3-isopropylmalate = (2S)-2-isopropylmalate. It participates in amino-acid biosynthesis; L-leucine biosynthesis; L-leucine from 3-methyl-2-oxobutanoate: step 2/4. Functionally, catalyzes the isomerization between 2-isopropylmalate and 3-isopropylmalate, via the formation of 2-isopropylmaleate. The protein is 3-isopropylmalate dehydratase large subunit of Shewanella putrefaciens (strain CN-32 / ATCC BAA-453).